Reading from the N-terminus, the 311-residue chain is 4-hydroxy-tetrahydrodipicolinate synthase (311 aa).

T51 is a pyruvate binding site. The Proton donor/acceptor role is filled by Y140. K168 serves as the catalytic Schiff-base intermediate with substrate. I209 provides a ligand contact to pyruvate.

Belongs to the DapA family. As to quaternary structure, homotetramer; dimer of dimers.

It is found in the cytoplasm. It catalyses the reaction L-aspartate 4-semialdehyde + pyruvate = (2S,4S)-4-hydroxy-2,3,4,5-tetrahydrodipicolinate + H2O + H(+). The protein operates within amino-acid biosynthesis; L-lysine biosynthesis via DAP pathway; (S)-tetrahydrodipicolinate from L-aspartate: step 3/4. Functionally, catalyzes the condensation of (S)-aspartate-beta-semialdehyde [(S)-ASA] and pyruvate to 4-hydroxy-tetrahydrodipicolinate (HTPA). This Streptococcus pneumoniae (strain CGSP14) protein is 4-hydroxy-tetrahydrodipicolinate synthase.